Here is a 66-residue protein sequence, read N- to C-terminus: Clarkitoxin-I-Mdum (66 aa).

4 cysteine pairs are disulfide-bonded: Cys-3-Cys-24, Cys-17-Cys-42, Cys-46-Cys-59, and Cys-60-Cys-65.

As to expression, expressed by the venom gland.

It is found in the secreted. Its function is as follows. No toxicity is observed upon intravenous or intracerebroventricular injection into mice. Has no cytotoxic activity towards C2C12 cells at 100 ug/ml. In Micrurus dumerilii (Coral snake), this protein is Clarkitoxin-I-Mdum.